A 439-amino-acid polypeptide reads, in one-letter code: Homogentisate 1,2-dioxygenase (439 aa).

His-289 acts as the Proton acceptor in catalysis. Fe cation is bound by residues His-332 and Glu-338. Tyr-347 and His-368 together coordinate homogentisate. His-368 serves as a coordination point for Fe cation.

Belongs to the homogentisate dioxygenase family. Hexamer; dimer of trimers. Requires Fe cation as cofactor.

It carries out the reaction homogentisate + O2 = 4-maleylacetoacetate + H(+). The protein operates within amino-acid degradation; L-phenylalanine degradation; acetoacetate and fumarate from L-phenylalanine: step 4/6. Involved in the catabolism of homogentisate (2,5-dihydroxyphenylacetate or 2,5-OH-PhAc), a central intermediate in the degradation of phenylalanine and tyrosine. Catalyzes the oxidative ring cleavage of the aromatic ring of homogentisate to yield maleylacetoacetate. The chain is Homogentisate 1,2-dioxygenase from Xanthomonas euvesicatoria pv. vesicatoria (strain 85-10) (Xanthomonas campestris pv. vesicatoria).